The sequence spans 170 residues: Ribosome maturation factor RimM (170 aa).

Residues 98–170 (EGQYYWADLE…RIELDWDPDF (73 aa)) enclose the PRC barrel domain.

The protein belongs to the RimM family. As to quaternary structure, binds ribosomal protein uS19.

The protein resides in the cytoplasm. In terms of biological role, an accessory protein needed during the final step in the assembly of 30S ribosomal subunit, possibly for assembly of the head region. Essential for efficient processing of 16S rRNA. May be needed both before and after RbfA during the maturation of 16S rRNA. It has affinity for free ribosomal 30S subunits but not for 70S ribosomes. The chain is Ribosome maturation factor RimM from Alkalilimnicola ehrlichii (strain ATCC BAA-1101 / DSM 17681 / MLHE-1).